Reading from the N-terminus, the 456-residue chain is tRNA-2-methylthio-N(6)-dimethylallyladenosine synthase (456 aa).

The 117-residue stretch at arginine 13–arginine 129 folds into the MTTase N-terminal domain. 6 residues coordinate [4Fe-4S] cluster: cysteine 22, cysteine 58, cysteine 92, cysteine 168, cysteine 172, and cysteine 175. The region spanning glycine 154–glutamine 384 is the Radical SAM core domain. A TRAM domain is found at leucine 387–serine 450.

Belongs to the methylthiotransferase family. MiaB subfamily. Monomer. [4Fe-4S] cluster serves as cofactor.

The protein resides in the cytoplasm. The catalysed reaction is N(6)-dimethylallyladenosine(37) in tRNA + (sulfur carrier)-SH + AH2 + 2 S-adenosyl-L-methionine = 2-methylsulfanyl-N(6)-dimethylallyladenosine(37) in tRNA + (sulfur carrier)-H + 5'-deoxyadenosine + L-methionine + A + S-adenosyl-L-homocysteine + 2 H(+). Catalyzes the methylthiolation of N6-(dimethylallyl)adenosine (i(6)A), leading to the formation of 2-methylthio-N6-(dimethylallyl)adenosine (ms(2)i(6)A) at position 37 in tRNAs that read codons beginning with uridine. This is tRNA-2-methylthio-N(6)-dimethylallyladenosine synthase from Syntrophobacter fumaroxidans (strain DSM 10017 / MPOB).